A 332-amino-acid chain; its full sequence is Protein pelota homolog (332 aa).

It belongs to the eukaryotic release factor 1 family. Pelota subfamily. Monomer. A divalent metal cation is required as a cofactor.

The protein resides in the cytoplasm. May function in recognizing stalled ribosomes, interact with stem-loop structures in stalled mRNA molecules, and effect endonucleolytic cleavage of the mRNA. May play a role in the release non-functional ribosomes and degradation of damaged mRNAs. Has endoribonuclease activity. This Pyrobaculum aerophilum (strain ATCC 51768 / DSM 7523 / JCM 9630 / CIP 104966 / NBRC 100827 / IM2) protein is Protein pelota homolog.